The following is a 442-amino-acid chain: 4-alpha-glucanotransferase (442 aa).

5 residues coordinate Ca(2+): Asp13, Asn15, Asp17, Val19, and Asp21. Catalysis depends on Asp186, which acts as the Nucleophile. Glu216 acts as the Proton donor in catalysis.

The protein belongs to the glycosyl hydrolase 13 family. As to quaternary structure, monomer. The cofactor is Ca(2+).

Its subcellular location is the cytoplasm. It catalyses the reaction Transfers a segment of a (1-&gt;4)-alpha-D-glucan to a new position in an acceptor, which may be glucose or a (1-&gt;4)-alpha-D-glucan.. Its function is as follows. Hydrolyzes the 1,4-alpha-glycoside bonds in oligomeric and polymeric 1,4-alpha-glucans and transfers oligosaccharides (maltotriose being the shortest one) to acceptor maltodextrins. This Thermotoga neapolitana protein is 4-alpha-glucanotransferase (mgtA).